A 172-amino-acid polypeptide reads, in one-letter code: Large ribosomal subunit protein uL10 (172 aa).

Belongs to the universal ribosomal protein uL10 family. In terms of assembly, part of the ribosomal stalk of the 50S ribosomal subunit. The N-terminus interacts with L11 and the large rRNA to form the base of the stalk. The C-terminus forms an elongated spine to which L12 dimers bind in a sequential fashion forming a multimeric L10(L12)X complex.

Forms part of the ribosomal stalk, playing a central role in the interaction of the ribosome with GTP-bound translation factors. The chain is Large ribosomal subunit protein uL10 from Clostridium tetani (strain Massachusetts / E88).